A 343-amino-acid chain; its full sequence is S-adenosylmethionine:tRNA ribosyltransferase-isomerase (343 aa).

The protein belongs to the QueA family. As to quaternary structure, monomer.

It localises to the cytoplasm. It carries out the reaction 7-aminomethyl-7-carbaguanosine(34) in tRNA + S-adenosyl-L-methionine = epoxyqueuosine(34) in tRNA + adenine + L-methionine + 2 H(+). The protein operates within tRNA modification; tRNA-queuosine biosynthesis. In terms of biological role, transfers and isomerizes the ribose moiety from AdoMet to the 7-aminomethyl group of 7-deazaguanine (preQ1-tRNA) to give epoxyqueuosine (oQ-tRNA). This is S-adenosylmethionine:tRNA ribosyltransferase-isomerase from Coxiella burnetii (strain Dugway 5J108-111).